The sequence spans 141 residues: Hemoglobin subunit alpha (141 aa).

The 141-residue stretch at 1-141 (VLSPADKTNV…VSTVLTSKYR (141 aa)) folds into the Globin domain. At serine 3 the chain carries Phosphoserine. Lysine 7 is subject to N6-succinyllysine. Threonine 8 is modified (phosphothreonine). The residue at position 11 (lysine 11) is an N6-succinyllysine. Position 16 is an N6-acetyllysine; alternate (lysine 16). Lysine 16 carries the N6-succinyllysine; alternate modification. A Phosphotyrosine modification is found at tyrosine 24. Serine 35 bears the Phosphoserine mark. Lysine 40 is subject to N6-succinyllysine. Phosphoserine is present on serine 49. Histidine 58 contacts O2. Histidine 87 contributes to the heme b binding site. Serine 102 carries the post-translational modification Phosphoserine. Phosphothreonine is present on threonine 108. Phosphoserine occurs at positions 124 and 131. Phosphothreonine is present on residues threonine 134 and threonine 137. Serine 138 carries the post-translational modification Phosphoserine.

This sequence belongs to the globin family. Heterotetramer of two alpha chains and two beta chains. As to expression, red blood cells.

Involved in oxygen transport from the lung to the various peripheral tissues. Its function is as follows. Hemopressin acts as an antagonist peptide of the cannabinoid receptor CNR1. Hemopressin-binding efficiently blocks cannabinoid receptor CNR1 and subsequent signaling. This is Hemoglobin subunit alpha (HBA) from Loris tardigradus (Slender loris).